A 278-amino-acid chain; its full sequence is MAVAIDGKRVSEELRKELKNFIDERVEKGLKVPCVSSILIGNDKGSLFYIKNQRRICKEIGIEFKNIVLEENIEEDKIIEVIEDLNKDENVHGIILQMPLPKTLDEEKIVNKICPSKDIDGLTDINAGRFYKGEKCFIPCTAQGIIEIIKSTKESISGKKAVVLGRSVIVGKPVAQLLVNEDATVTICHSKTKDIKSLCKEADIIVSAMGIPKFVKEDFIKDGAIVIDVGFSVLDGKMVGDIDYDNVFKKAGFITPVPGGVGSVTPTMLIKNLCEVFK.

NADP(+) contacts are provided by residues 165 to 167 and serine 190; that span reads GRS.

The protein belongs to the tetrahydrofolate dehydrogenase/cyclohydrolase family. Homodimer.

The catalysed reaction is (6R)-5,10-methylene-5,6,7,8-tetrahydrofolate + NADP(+) = (6R)-5,10-methenyltetrahydrofolate + NADPH. It carries out the reaction (6R)-5,10-methenyltetrahydrofolate + H2O = (6R)-10-formyltetrahydrofolate + H(+). It participates in one-carbon metabolism; tetrahydrofolate interconversion. Its function is as follows. Catalyzes the oxidation of 5,10-methylenetetrahydrofolate to 5,10-methenyltetrahydrofolate and then the hydrolysis of 5,10-methenyltetrahydrofolate to 10-formyltetrahydrofolate. This chain is Bifunctional protein FolD, found in Clostridium tetani (strain Massachusetts / E88).